A 202-amino-acid polypeptide reads, in one-letter code: MTEPLIKMPKKSVKERQQQVLEVLIGLLNSEQGMQRVTTERLAKAVGVSEGALYRYFPSKSKMFEALIERIEQTLTSYINASKRKENSTALAVKAILYTVIEFARKNPGVTRILTGHALMFENSELKLRVAKFFDGLELQFVNILQMRKLREGKAFQDERALAGYLVTFCEGQFLRLVRSNFSSNPHQHFEKQWSLIKPLFE.

The HTH tetR-type domain occupies 14–75 (KERQQQVLEV…ALIERIEQTL (62 aa)). Positions 38–57 (TTERLAKAVGVSEGALYRYF) form a DNA-binding region, H-T-H motif.

The protein belongs to the nucleoid occlusion factor SlmA family. As to quaternary structure, homodimer. Interacts with FtsZ.

The protein resides in the cytoplasm. It localises to the nucleoid. Required for nucleoid occlusion (NO) phenomenon, which prevents Z-ring formation and cell division over the nucleoid. Acts as a DNA-associated cell division inhibitor that binds simultaneously chromosomal DNA and FtsZ, and disrupts the assembly of FtsZ polymers. SlmA-DNA-binding sequences (SBS) are dispersed on non-Ter regions of the chromosome, preventing FtsZ polymerization at these regions. The sequence is that of Nucleoid occlusion factor SlmA from Haemophilus ducreyi (strain 35000HP / ATCC 700724).